We begin with the raw amino-acid sequence, 772 residues long: DNA ligase (772 aa).

Residues 80–84 (DAEYD), 130–131 (SL), and E160 contribute to the NAD(+) site. The active-site N6-AMP-lysine intermediate is the K162. The NAD(+) site is built by R183, E220, K336, and K360. Zn(2+) is bound by residues C454, C457, C473, and C479. One can recognise a BRCT domain in the interval 685–772 (APEQTLEGLT…NGPQGITTIG (88 aa)).

This sequence belongs to the NAD-dependent DNA ligase family. LigA subfamily. It depends on Mg(2+) as a cofactor. The cofactor is Mn(2+).

It carries out the reaction NAD(+) + (deoxyribonucleotide)n-3'-hydroxyl + 5'-phospho-(deoxyribonucleotide)m = (deoxyribonucleotide)n+m + AMP + beta-nicotinamide D-nucleotide.. In terms of biological role, DNA ligase that catalyzes the formation of phosphodiester linkages between 5'-phosphoryl and 3'-hydroxyl groups in double-stranded DNA using NAD as a coenzyme and as the energy source for the reaction. It is essential for DNA replication and repair of damaged DNA. This Cutibacterium acnes (strain DSM 16379 / KPA171202) (Propionibacterium acnes) protein is DNA ligase.